The sequence spans 146 residues: uncharacterized protein (146 aa).

This is an uncharacterized protein from Aquifex aeolicus (strain VF5).